A 179-amino-acid polypeptide reads, in one-letter code: Inosine/xanthosine triphosphatase (179 aa).

Substrate is bound at residue 8–13 (TTNPAK). Mg(2+) is bound by residues Asp-38 and Glu-68. 68-69 (EA) is a binding site for substrate.

Belongs to the YjjX NTPase family. In terms of assembly, homodimer. It depends on Mg(2+) as a cofactor. The cofactor is Mn(2+).

It carries out the reaction XTP + H2O = XDP + phosphate + H(+). The enzyme catalyses ITP + H2O = IDP + phosphate + H(+). Phosphatase that hydrolyzes non-canonical purine nucleotides such as XTP and ITP to their respective diphosphate derivatives. Probably excludes non-canonical purines from DNA/RNA precursor pool, thus preventing their incorporation into DNA/RNA and avoiding chromosomal lesions. This Pectobacterium carotovorum subsp. carotovorum (strain PC1) protein is Inosine/xanthosine triphosphatase.